We begin with the raw amino-acid sequence, 1105 residues long: AP-3 complex subunit beta-1 (1105 aa).

Disordered stretches follow at residues 1-26 and 271-292; these read MSSN…EATS and KNFY…KKSY. Phosphoserine is present on residues S276 and S610. The tract at residues 668-824 is disordered; that stretch reads KKEKPMKKFY…KPQQERHPPS (157 aa). Positions 679–704 are enriched in acidic residues; the sequence is ESEEEEDEDEDEDEEEEEKEDEDENP. Composition is skewed to low complexity over residues 705–722 and 730–741; these read SDSS…SGDT and DSSSGQDSETGS. The span at 750–759 shows a compositional bias: basic residues; sequence VAKRNSKTKR. A compositionally biased stretch (basic and acidic residues) spans 760-774; that stretch reads KSDSENREKKNENSK. Phosphoserine is present on residues S761 and S763. Low complexity predominate over residues 775-788; that stretch reads ASESSSEESSSMED. Residues 789-799 show a composition bias toward acidic residues; the sequence is SSSESESESGS. The segment covering 811-824 has biased composition (basic and acidic residues); the sequence is AKERKPQQERHPPS.

The protein belongs to the adaptor complexes large subunit family. As to quaternary structure, adaptor protein complex 3 (AP-3) is a heterotetramer composed of two large adaptins (delta-type subunit AP3D1 and beta-type subunit AP3B1 or AP3B2), a medium adaptin (mu-type subunit AP3M1 or AP3M2) and a small adaptin (sigma-type subunit APS1 or AP3S2). AP-3 associates with the BLOC-1 complex. Interacts with KIF3A; interaction is direct; interaction is impaired by pyrophosphorylation of AP3B1. Phosphorylated on serine residues. In terms of processing, pyrophosphorylated by 5-diphosphoinositol pentakisphosphate (5-IP7). Pyrophosphorylation impairs interaction with KIF3A. Serine pyrophosphorylation is achieved by Mg(2+)-dependent, but enzyme independent transfer of a beta-phosphate from a inositol pyrophosphate to a pre-phosphorylated serine residue. Ubiquitously expressed.

It localises to the cytoplasmic vesicle. It is found in the clathrin-coated vesicle membrane. The protein localises to the golgi apparatus. Functionally, subunit of non-clathrin- and clathrin-associated adaptor protein complex 3 (AP-3) that plays a role in protein sorting in the late-Golgi/trans-Golgi network (TGN) and/or endosomes. The AP complexes mediate both the recruitment of clathrin to membranes and the recognition of sorting signals within the cytosolic tails of transmembrane cargo molecules. AP-3 appears to be involved in the sorting of a subset of transmembrane proteins targeted to lysosomes and lysosome-related organelles. In concert with the BLOC-1 complex, AP-3 is required to target cargos into vesicles assembled at cell bodies for delivery into neurites and nerve terminals. This Mus musculus (Mouse) protein is AP-3 complex subunit beta-1 (Ap3b1).